A 184-amino-acid chain; its full sequence is Probable RNA 2'-phosphotransferase (184 aa).

It belongs to the KptA/TPT1 family.

In terms of biological role, removes the 2'-phosphate from RNA via an intermediate in which the phosphate is ADP-ribosylated by NAD followed by a presumed transesterification to release the RNA and generate ADP-ribose 1''-2''-cyclic phosphate (APPR&gt;P). May function as an ADP-ribosylase. In Escherichia coli O6:K15:H31 (strain 536 / UPEC), this protein is Probable RNA 2'-phosphotransferase.